Here is a 219-residue protein sequence, read N- to C-terminus: Ribose-5-phosphate isomerase A (219 aa).

Substrate contacts are provided by residues 28–31 (SGST), 81–84 (DGAD), and 94–97 (KGGG). The active-site Proton acceptor is the glutamate 103. Lysine 121 is a substrate binding site.

This sequence belongs to the ribose 5-phosphate isomerase family. Homodimer.

It carries out the reaction aldehydo-D-ribose 5-phosphate = D-ribulose 5-phosphate. The protein operates within carbohydrate degradation; pentose phosphate pathway; D-ribose 5-phosphate from D-ribulose 5-phosphate (non-oxidative stage): step 1/1. Catalyzes the reversible conversion of ribose-5-phosphate to ribulose 5-phosphate. In Haemophilus influenzae (strain 86-028NP), this protein is Ribose-5-phosphate isomerase A.